The chain runs to 488 residues: UDP-N-acetylmuramate--L-alanine ligase (488 aa).

127–133 (GTHGKTT) is a binding site for ATP.

It belongs to the MurCDEF family.

It is found in the cytoplasm. It carries out the reaction UDP-N-acetyl-alpha-D-muramate + L-alanine + ATP = UDP-N-acetyl-alpha-D-muramoyl-L-alanine + ADP + phosphate + H(+). Its pathway is cell wall biogenesis; peptidoglycan biosynthesis. Its function is as follows. Cell wall formation. In Shewanella sp. (strain ANA-3), this protein is UDP-N-acetylmuramate--L-alanine ligase.